A 364-amino-acid chain; its full sequence is Chaperone protein DnaJ 1 (364 aa).

Residues 7-71 enclose the J domain; that stretch reads DYYEILGVNR…ERRSEYDAIL (65 aa). A CR-type zinc finger spans residues 124 to 200; it reads GCEKEIIYSR…CYGRGRVSAQ (77 aa). Positions 137, 140, 154, 157, 174, 177, 188, and 191 each coordinate Zn(2+). CXXCXGXG motif repeat units follow at residues 137-144, 154-161, 174-181, and 188-195; these read CPVCEGMG, CHACNGEG, CSVCKGKG, and CPTCYGRG.

This sequence belongs to the DnaJ family. As to quaternary structure, homodimer. Zn(2+) serves as cofactor.

It localises to the cytoplasm. Participates actively in the response to hyperosmotic and heat shock by preventing the aggregation of stress-denatured proteins and by disaggregating proteins, also in an autonomous, DnaK-independent fashion. Unfolded proteins bind initially to DnaJ; upon interaction with the DnaJ-bound protein, DnaK hydrolyzes its bound ATP, resulting in the formation of a stable complex. GrpE releases ADP from DnaK; ATP binding to DnaK triggers the release of the substrate protein, thus completing the reaction cycle. Several rounds of ATP-dependent interactions between DnaJ, DnaK and GrpE are required for fully efficient folding. Also involved, together with DnaK and GrpE, in the DNA replication of plasmids through activation of initiation proteins. The protein is Chaperone protein DnaJ 1 of Aquifex aeolicus (strain VF5).